The primary structure comprises 464 residues: MEYRIEKDTMGEVKVPADRYWAAQTERSRNNFRIGPEASMPVEIIEAFAYLKKAAAFANAELGALTTEKRDLIAMVCDEILANKLADEFPLVIWQTGSGTQSNMNLNEVIANRAHVLQGGALGEKSIIHPNDDVNKSQSSNDTYPTAMHIAAYKKVVEVTIPAIERLQKTFAIKSEAFKDVVKIGRTHLMDATPLTLGQEFSAYAAQLQFGLLALKNTLPHLAQLALGGTAVGTGLNTPKGYDVKVAEYIAQFTQLPFITAENKFEALATHDAIIETHGALKQIAMSLFKIANDIRLLASGPRSGIGEILIPENEPGSSIMPGKVNPTQCEAMTMVAAQVLGNDTTISFAGSQGHFQLNVFKPVMAANFLQSAQLLADVCISFDEHCASGIEPNYPRIQQQLENSLMLVTALNTHIGYENAAKIAKTAHKNGTTLKEEAINLGLVTAEQFDQWVRPQNMVGSLK.

Residues 98 to 100, 129 to 132, 139 to 141, and threonine 187 each bind substrate; these read SGT, HPND, and SSN. Histidine 188 acts as the Proton donor/acceptor in catalysis. Serine 318 is an active-site residue. Residues serine 319 and 324-326 contribute to the substrate site; that span reads KVN.

It belongs to the class-II fumarase/aspartase family. Fumarase subfamily. In terms of assembly, homotetramer.

It localises to the cytoplasm. The enzyme catalyses (S)-malate = fumarate + H2O. It participates in carbohydrate metabolism; tricarboxylic acid cycle; (S)-malate from fumarate: step 1/1. Involved in the TCA cycle. Catalyzes the stereospecific interconversion of fumarate to L-malate. This is Fumarate hydratase class II from Haemophilus ducreyi (strain 35000HP / ATCC 700724).